Here is a 421-residue protein sequence, read N- to C-terminus: FAD-dependent monooxygenase atnJ (421 aa).

A helical transmembrane segment spans residues 9-29; that stretch reads LVPLHVVIVGAGIGGLSAAVA. Residues Glu-41 and Ala-54 each coordinate FAD. Arg-188 is a catalytic residue. 2 residues coordinate FAD: Asp-303 and Val-316. The disordered stretch occupies residues 371–392; the sequence is RDGDAQAARDSQRKATSGTGQN.

The protein belongs to the paxM FAD-dependent monooxygenase family. Requires FAD as cofactor.

Its subcellular location is the membrane. It functions in the pathway secondary metabolite biosynthesis; terpenoid biosynthesis. FAD-dependent monooxygenase; part of the gene cluster that mediates the biosynthesis of the meroterpenoids arthripenoids. The pathway begins with the HR-PKS atnH that catalyzes two chain-extension steps to form a reduced triketide, which then primes the SAT domain in the NR-PKS atnG to initiate three more cycles of extension to give a linear hexaketide corresponding to the polyketide part of arthripenoids. The FAD-dependent monooxygenase atnJ then performs an oxidative decarboxylation at C11 of the atnH/atnG product, via an electrophilic aromatic hydroxylation with concomitant ipso-decarboxylation. The membrane-bound polyprenyl transferase atnF then introduces a farnesyl group before the FAD-dependent monooxygenase atnK functions as the first epoxidase on terminal C12'-C13' olefin, followed by a second epoxidation on C7'-C8' catalyzed by atnA. The terpene cyclase/mutase atnI then initiates the sequential tricyclic ring formation through protonation of the terminal epoxide and catalyzes the regioselective and stereoselective 6/6/6-tricyclic ring formation. The cytochrome P450 monooxygenase atnM is responsible for hydroxylating both C1' and C10'. The next steps may involve ketoreduction and acetyl transfer by the ketoreductase atnB and the acetyltransferase atnC, and lead to the production of arthripenoid B, the final biosynthetic product of the atn cluster. The hydroquinone moiety in arthripenoid B is prone to undergo spontaneous oxidation to afford a benzoquinone compound, a key intermediate for generating structure diversity. For instance, addition of a cysteine followed by ring contraction gives arthripenoid A, tautomerization gives the main product arthripenoid C, addition of a molecular of water or amine affords arthripenoid D or E, respectively, and loss of one water forms arthripenoid F. This Arthrinium sp protein is FAD-dependent monooxygenase atnJ.